The sequence spans 313 residues: Probable inactive peptidyl-prolyl cis-trans isomerase-like 6 (313 aa).

A PPIase cyclophilin-type domain is found at 147–310; that stretch reads YLDICIDLSP…LLCSIADSGV (164 aa).

Belongs to the cyclophilin-type PPIase family.

Functionally, probable inactive PPIase with no peptidyl-prolyl cis-trans isomerase activity. This Mus musculus (Mouse) protein is Probable inactive peptidyl-prolyl cis-trans isomerase-like 6.